The chain runs to 310 residues: D-alanine--D-alanine ligase (310 aa).

The 199-residue stretch at 107–305 (KKVWQSAGLP…FSALVQSILA (199 aa)) folds into the ATP-grasp domain. 134–189 (EQLHCQDFVIKPALEGSSVGVSRVKNQEQLAAAIPFAGGARAKIMAEPWIVGRELT) is an ATP binding site. The Mg(2+) site is built by Asp259, Glu272, and Asn274.

This sequence belongs to the D-alanine--D-alanine ligase family. The cofactor is Mg(2+). Mn(2+) serves as cofactor.

It localises to the cytoplasm. It carries out the reaction 2 D-alanine + ATP = D-alanyl-D-alanine + ADP + phosphate + H(+). It participates in cell wall biogenesis; peptidoglycan biosynthesis. Functionally, cell wall formation. This Dichelobacter nodosus (strain VCS1703A) protein is D-alanine--D-alanine ligase.